Reading from the N-terminus, the 656-residue chain is Heparan-alpha-glucosaminide N-acetyltransferase (656 aa).

The segment at Met-1–Gly-31 is disordered. At Met-1–Ser-185 the chain is on the lumenal, vesicle side. N-linked (GlcNAc...) asparagine glycosylation is found at Asn-137 and Asn-157. Cys-146 and Cys-455 are joined by a disulfide. Residues Asn-186 to Leu-206 form a helical membrane-spanning segment. The Cytoplasmic portion of the chain corresponds to Arg-207–Arg-268. The segment at Ser-234–Thr-253 is disordered. Phosphoserine occurs at positions 238 and 240. Position 249 is a phosphotyrosine (Tyr-249). A helical transmembrane segment spans residues Gly-269–Lys-289. His-290 is an active-site residue. Residues His-290–Gly-295 are Lumenal, vesicle-facing. A helical membrane pass occupies residues Leu-296–Leu-316. Residues Ser-317–Arg-338 are Cytoplasmic-facing. The chain crosses the membrane as a helical span at residues Ser-339 to Leu-359. Residues Ser-360–Pro-367 are Lumenal, vesicle-facing. The helical transmembrane segment at Gly-368–Trp-388 threads the bilayer. Over Lys-389–Gln-413 the chain is Cytoplasmic. A helical transmembrane segment spans residues Trp-414–Pro-434. The Lumenal, vesicle portion of the chain corresponds to Gly-435–Gly-493. A helical membrane pass occupies residues Val-494–Leu-514. Topologically, residues Val-515–Lys-522 are cytoplasmic. Residues Ala-523 to Thr-543 form a helical membrane-spanning segment. At Lys-544–Asn-557 the chain is on the lumenal, vesicle side. Residues Leu-558 to Leu-578 form a helical membrane-spanning segment. Residues Tyr-579 to Lys-585 lie on the Cytoplasmic side of the membrane. Residues Gly-586 to Gly-606 traverse the membrane as a helical segment. The Lumenal, vesicle portion of the chain corresponds to His-607–Lys-627. A helical transmembrane segment spans residues Glu-628 to Tyr-648. The interval Val-641–Ile-656 is lysosomal targeting region. At Lys-649–Ile-656 the chain is on the cytoplasmic side.

As to quaternary structure, homooligomer. Homooligomerization is necessary for enzyme activity. Post-translationally, undergoes intralysosomal proteolytic cleavage; occurs within the end of the first and/or the beginning of the second luminal domain and is essential for the activation of the enzyme. In terms of processing, glycosylated. Expressed in the retina.

The protein resides in the lysosome membrane. The enzyme catalyses alpha-D-glucosaminyl-[heparan sulfate](n) + acetyl-CoA = N-acetyl-alpha-D-glucosaminyl-[heparan sulfate](n) + CoA + H(+). Lysosomal acetyltransferase that acetylates the non-reducing terminal alpha-glucosamine residue of intralysosomal heparin or heparan sulfate, converting it into a substrate for luminal alpha-N-acetyl glucosaminidase. The polypeptide is Heparan-alpha-glucosaminide N-acetyltransferase (Hgsnat) (Mus musculus (Mouse)).